The chain runs to 329 residues: DGAT1/2-independent enzyme synthesizing storage lipids (329 aa).

Residues 1 to 50 are Lumenal-facing; that stretch reads MIDNNQTCAAGQDSVPYVTCMIYVLEEWLGVEQLEDYLNFANHLLWVFTP. Asn-5 carries N-linked (GlcNAc...) asparagine glycosylation. Residues 51-71 form a helical membrane-spanning segment; that stretch reads LILLILPYFTIFLLYLTIIFL. The Cytoplasmic portion of the chain corresponds to 72–120; it reads HIYKRKNVLKEAYSHNLWDGARKTVATLWDGHAAVWHGYEVHGMEKIPE. A helical membrane pass occupies residues 121-141; that stretch reads GAALIIFYHGAIPIDFYYFMA. His-129 is a catalytic residue. At 142-329 the chain is on the lumenal side; sequence KIFIQKGRTC…DRFHKEQKAH (188 aa).

The protein belongs to the diacylglycerol acyltransferase family. Highly divergent. In terms of tissue distribution, widely expressed, with highest level in the brain, followed by lung and duodenum, and lowest levels in tongue, testis, skin and ileum.

The protein localises to the endoplasmic reticulum membrane. It catalyses the reaction a 1,2-diacylglycerol + a 1,2-diacyl-sn-glycero-3-phosphocholine = a triacylglycerol + a 1-acyl-sn-glycero-3-phosphocholine. The catalysed reaction is a 1-O-alkyl-2-acyl-sn-glycero-3-phosphocholine + a 1,2-diacylglycerol = a 1-O-alkyl-sn-glycero-3-phosphocholine + a triacylglycerol. The enzyme catalyses a 2-acylglycerol + an acyl-CoA = a 1,2-diacylglycerol + CoA. It carries out the reaction an acyl-CoA + a 1,2-diacyl-sn-glycerol = a triacyl-sn-glycerol + CoA. It catalyses the reaction 2-(9Z-octadecenoyl)-glycerol + (9Z)-octadecenoyl-CoA = 1,2-di-(9Z-octadecenoyl)-glycerol + CoA. The catalysed reaction is 1,2-di-(9Z-octadecenoyl)-sn-glycerol + (9Z)-octadecenoyl-CoA = 1,2,3-tri-(9Z-octadecenoyl)-glycerol + CoA. Acyltransferase activity is specifically inhibited by TMX1 at the endoplasmic reticulum, restricting accumulation of triacylglycerol. Functionally, catalytic subunit of the alternative triglyceride biosynthesis pathway, which mediates formation of triacylglycerol from diacylglycerol and membrane phospholipids. Synthesizes triacylglycerol at the expense of membrane phospholipids, such as phosphatidylcholine (PC) and its ether-linked form (ePC), thereby altering the composition of membranes. The alternative triglyceride biosynthesis pathway is probably required to provide the energy required for rapid growth when fuel sources are limiting. It maintains mitochondrial function during periods of extracellular lipid starvation. Can also use acyl-CoA as donor: acts as a acyl-CoA:monoacylglycerol acyltransferase (MGAT), but also shows acyl-CoA:diacylglycerol acyltransferase (DGAT) activity. In Mus musculus (Mouse), this protein is DGAT1/2-independent enzyme synthesizing storage lipids.